The sequence spans 296 residues: 4-hydroxy-tetrahydrodipicolinate synthase (296 aa).

Thr-49 contributes to the pyruvate binding site. Catalysis depends on Tyr-137, which acts as the Proton donor/acceptor. Catalysis depends on Lys-166, which acts as the Schiff-base intermediate with substrate. Ile-208 serves as a coordination point for pyruvate.

This sequence belongs to the DapA family. In terms of assembly, homotetramer; dimer of dimers.

Its subcellular location is the cytoplasm. It catalyses the reaction L-aspartate 4-semialdehyde + pyruvate = (2S,4S)-4-hydroxy-2,3,4,5-tetrahydrodipicolinate + H2O + H(+). The protein operates within amino-acid biosynthesis; L-lysine biosynthesis via DAP pathway; (S)-tetrahydrodipicolinate from L-aspartate: step 3/4. In terms of biological role, catalyzes the condensation of (S)-aspartate-beta-semialdehyde [(S)-ASA] and pyruvate to 4-hydroxy-tetrahydrodipicolinate (HTPA). The protein is 4-hydroxy-tetrahydrodipicolinate synthase of Chlorobium luteolum (strain DSM 273 / BCRC 81028 / 2530) (Pelodictyon luteolum).